A 165-amino-acid chain; its full sequence is SsrA-binding protein (165 aa).

The disordered stretch occupies residues 141 to 165 (EDRRHAIAERETKREMDREISRRRR).

It belongs to the SmpB family.

The protein resides in the cytoplasm. In terms of biological role, required for rescue of stalled ribosomes mediated by trans-translation. Binds to transfer-messenger RNA (tmRNA), required for stable association of tmRNA with ribosomes. tmRNA and SmpB together mimic tRNA shape, replacing the anticodon stem-loop with SmpB. tmRNA is encoded by the ssrA gene; the 2 termini fold to resemble tRNA(Ala) and it encodes a 'tag peptide', a short internal open reading frame. During trans-translation Ala-aminoacylated tmRNA acts like a tRNA, entering the A-site of stalled ribosomes, displacing the stalled mRNA. The ribosome then switches to translate the ORF on the tmRNA; the nascent peptide is terminated with the 'tag peptide' encoded by the tmRNA and targeted for degradation. The ribosome is freed to recommence translation, which seems to be the essential function of trans-translation. The polypeptide is SsrA-binding protein (Anaeromyxobacter sp. (strain Fw109-5)).